Here is a 598-residue protein sequence, read N- to C-terminus: Probable transporter mch1 (598 aa).

Residues 1-49 (MASPTPAPRPDQISASTPLLQSDSTSSCASSIRSLSPSRRRHRNGRTSP) are disordered. Over residues 22–37 (SDSTSSCASSIRSLSP) the composition is skewed to low complexity. The N-linked (GlcNAc...) asparagine glycan is linked to asparagine 57. A run of 6 helical transmembrane segments spans residues 63-83 (ALLS…GHIF), 96-116 (GLSS…GYMC), 122-142 (GPLS…AAGV), 164-184 (LAYA…CSMY), 202-222 (GLAL…QSQL), and 241-261 (VFHF…LGTF). Residues 315 to 334 (AGILDPSKPDNDSDSEEEDD) form a disordered region. N-linked (GlcNAc...) asparagine glycosylation is present at asparagine 325. Transmembrane regions (helical) follow at residues 355–375 (HTMW…EAFI), 405–425 (IVGI…DLLA), 453–473 (FLLF…SGWI), 486–506 (LVGA…TVIW), 516–536 (GIVA…YSAV), and 565–585 (SAFW…LWAW).

The protein belongs to the major facilitator superfamily.

Its subcellular location is the vacuole membrane. In terms of biological role, probable transporter. This chain is Probable transporter mch1 (mch1), found in Neurospora crassa (strain ATCC 24698 / 74-OR23-1A / CBS 708.71 / DSM 1257 / FGSC 987).